Consider the following 519-residue polypeptide: Circadian clock oscillator protein KaiC (519 aa).

2 KaiC domains span residues 1–246 (MSEK…VNIF) and 260–519 (VRVS…GSDS). Residues glycine 48, threonine 49, glycine 50, lysine 51, threonine 52, leucine 53, lysine 223, leucine 224, arginine 225, threonine 227, histidine 229, threonine 239, threonine 289, glycine 290, threonine 291, glycine 292, lysine 293, threonine 294, and leucine 295 each coordinate ATP. Threonine 52 is a Mg(2+) binding site. Residue threonine 294 participates in Mg(2+) binding. Glutamate 317 is a Mg(2+) binding site. Tryptophan 330 provides a ligand contact to ATP. A Phosphoserine; by autocatalysis modification is found at serine 430. Threonine 431 is modified (phosphothreonine; by autocatalysis). ATP is bound by residues arginine 450, lysine 456, methionine 457, arginine 458, serine 460, histidine 462, and lysine 464.

This sequence belongs to the KaiC family. In terms of assembly, homohexamer; hexamerization is dependent on ATP-binding. The KaiABC complex composition changes during the circadian cycle to control KaiC phosphorylation. Complexes KaiC(6), KaiA(2-4):KaiC(6), KaiB(6):KaiC(6) and KaiC(6):KaiB(6):KaiA(12) are among the most important forms, many form cooperatively. KaiC interacts with SasA, activating its autokinase function and leading to RpaA activation. It depends on Mg(2+) as a cofactor. Post-translationally, phosphorylated on serine and threonine residues by autocatalysis. Has a 4 step phosphorylation cycle; the autokinase acts first on Thr-431, then Ser-430. When Ser-430 is modified KaiC switches to an autophosphatase mode, acting first on phospho-Thr-431 then phospho-Ser-430.

It carries out the reaction L-seryl-[protein] + ATP = O-phospho-L-seryl-[protein] + ADP + H(+). The catalysed reaction is L-threonyl-[protein] + ATP = O-phospho-L-threonyl-[protein] + ADP + H(+). It catalyses the reaction ATP + H2O = ADP + phosphate + H(+). Its activity is regulated as follows. The interaction with KaiA enhances its phosphorylation status, while the interaction with KaiB decreases it. In terms of biological role, central component of the KaiABC oscillator complex, which constitutes the main circadian regulator in cyanobacteria. Complex composition changes during the circadian cycle to control KaiC phosphorylation. KaiA stimulates KaiC autophosphorylation, while KaiB sequesters KaiA, leading to KaiC autodephosphorylation. Clock output pathways impact the RpaA transcriptional regulator. KaiC enhances the autophosphorylation activity of SasA, which then transfers its phosphate group to RpaA to activate it. KaiB and KaiC together enhance the phospho-RpaA dephosphatase activity of CikA. Its function is as follows. Has a weak, temperature-independent ATPase activity; ATPase activity defines the circadian period. The phosphorylation state of KaiC modulates its ATPase activity and effects KaiB binding. The sequence is that of Circadian clock oscillator protein KaiC from Nostoc sp. (strain PCC 7120 / SAG 25.82 / UTEX 2576).